A 311-amino-acid polypeptide reads, in one-letter code: Ornithine carbamoyltransferase (311 aa).

Residues 59–62 (STRT), Gln-86, Arg-110, and 137–140 (HPCQ) contribute to the carbamoyl phosphate site. L-ornithine-binding positions include Asn-168, Asp-228, and 232–233 (SM). Carbamoyl phosphate-binding positions include 267–268 (CL) and Arg-295.

The protein belongs to the aspartate/ornithine carbamoyltransferase superfamily. OTCase family.

The protein localises to the cytoplasm. It carries out the reaction carbamoyl phosphate + L-ornithine = L-citrulline + phosphate + H(+). It participates in amino-acid biosynthesis; L-arginine biosynthesis; L-arginine from L-ornithine and carbamoyl phosphate: step 1/3. Its function is as follows. Reversibly catalyzes the transfer of the carbamoyl group from carbamoyl phosphate (CP) to the N(epsilon) atom of ornithine (ORN) to produce L-citrulline. The sequence is that of Ornithine carbamoyltransferase from Caulobacter vibrioides (strain ATCC 19089 / CIP 103742 / CB 15) (Caulobacter crescentus).